Here is a 485-residue protein sequence, read N- to C-terminus: Beta-amyrin 28-monooxygenase CYP716A378 (485 aa).

A helical; Signal-anchor for type II membrane protein transmembrane segment spans residues 3 to 23; the sequence is LFFICGLVLFSTLSLISLFLL. 2 N-linked (GlcNAc...) asparagine glycosylation sites follow: N25 and N386. C426 lines the heme pocket.

Belongs to the cytochrome P450 family. Requires heme as cofactor. In terms of tissue distribution, mainly expressed in flowers and flower buds, to a lesser extent in young leaves and, at low levels, in old leaves, stems and roots.

The protein resides in the membrane. It carries out the reaction beta-amyrin + 3 reduced [NADPH--hemoprotein reductase] + 3 O2 = oleanolate + 3 oxidized [NADPH--hemoprotein reductase] + 4 H2O + 4 H(+). Its pathway is secondary metabolite biosynthesis; terpenoid biosynthesis. Its function is as follows. Component of the oleanane-type triterpene saponins (e.g. saponarioside A and saponarioside B) biosynthetic pathway, leading to the production of natural products with detergent properties used as traditional sources of soap. An oxidoreductase that facilitates the oxidation of the methyl group to a carboxyl group at the C-28 position of beta-amyrin, resulting in the formation of oleanolate. This is Beta-amyrin 28-monooxygenase CYP716A378 from Saponaria officinalis (Common soapwort).